A 600-amino-acid chain; its full sequence is NADH-quinone oxidoreductase subunit C/D (600 aa).

Residues 1–190 (MVNNMTDLTA…SPFELTKAKQ (190 aa)) are NADH dehydrogenase I subunit C. Residues 214–600 (DFMFLNLGPN…IDFVMSDVDR (387 aa)) are NADH dehydrogenase I subunit D.

It in the N-terminal section; belongs to the complex I 30 kDa subunit family. This sequence in the C-terminal section; belongs to the complex I 49 kDa subunit family. NDH-1 is composed of 13 different subunits. Subunits NuoB, CD, E, F, and G constitute the peripheral sector of the complex.

It is found in the cell inner membrane. The enzyme catalyses a quinone + NADH + 5 H(+)(in) = a quinol + NAD(+) + 4 H(+)(out). In terms of biological role, NDH-1 shuttles electrons from NADH, via FMN and iron-sulfur (Fe-S) centers, to quinones in the respiratory chain. The immediate electron acceptor for the enzyme in this species is believed to be ubiquinone. Couples the redox reaction to proton translocation (for every two electrons transferred, four hydrogen ions are translocated across the cytoplasmic membrane), and thus conserves the redox energy in a proton gradient. This is NADH-quinone oxidoreductase subunit C/D from Escherichia coli O127:H6 (strain E2348/69 / EPEC).